We begin with the raw amino-acid sequence, 118 residues long: MICOS complex subunit MIC13 (118 aa).

At 1–7 the chain is on the mitochondrial matrix side; sequence MVARVWS. The helical transmembrane segment at 8-26 threads the bilayer; sequence LMRFLIKGSVAGGAVYLVY. Residues 27–118 are Mitochondrial intermembrane-facing; the sequence is DQELLGPSDK…GWEYVKARTK (92 aa).

This sequence belongs to the MICOS complex subunit Mic13 family. In terms of assembly, component of the mitochondrial contact site and cristae organizing system (MICOS) complex, composed of at least MICOS10/MIC10, CHCHD3/MIC19, CHCHD6/MIC25, APOO/MIC26, MICOS13/MIC13, APOOL/MIC27 and IMMT/MIC60. The complex associates with mitochondrial outer membrane proteins SAMM50, MTX1 and MTX2, and with HSPA9.

The protein resides in the mitochondrion inner membrane. Functionally, component of the MICOS complex, a large protein complex of the mitochondrial inner membrane that plays crucial roles in the maintenance of crista junctions, inner membrane architecture, and formation of contact sites to the outer membrane. Constituent of mature MICOS complex, it is required for the formation of cristae junction (CJ) and maintenance of cristae morphology. Required for the incorporation of MICOS10/MIC10 into the MICOS complex. This Macaca fascicularis (Crab-eating macaque) protein is MICOS complex subunit MIC13.